The sequence spans 381 residues: Ubiquitin-associated protein 1-like (381 aa).

In terms of domain architecture, UMA spans 4–50 (LDGVPFKLPKGFVIGTEPLPGPELSVPACGEVLLGSMHDFSLERTAL). 2 disordered regions span residues 87 to 141 (LAPA…PGRR) and 185 to 228 (SLCP…LRSH). Positions 95–104 (RDPEAGHQER) are enriched in basic and acidic residues. Positions 105–123 (PEEEGEDEAEASSGSEEEP) are enriched in acidic residues. The span at 124–141 (APSSLQPGSPASPGPGRR) shows a compositional bias: low complexity. A compositionally biased stretch (pro residues) spans 197–216 (ASPPGPAPQHPAAPASPPRP).

This is Ubiquitin-associated protein 1-like (UBAP1L) from Homo sapiens (Human).